Reading from the N-terminus, the 267-residue chain is Triosephosphate isomerase (267 aa).

Substrate is bound at residue 12-14 (NWK). Residue His-104 is the Electrophile of the active site. Glu-176 acts as the Proton acceptor in catalysis. Substrate-binding positions include Gly-182, Ser-222, and 243 to 244 (GG).

This sequence belongs to the triosephosphate isomerase family. In terms of assembly, homodimer.

Its subcellular location is the cytoplasm. It catalyses the reaction D-glyceraldehyde 3-phosphate = dihydroxyacetone phosphate. It functions in the pathway carbohydrate biosynthesis; gluconeogenesis. The protein operates within carbohydrate degradation; glycolysis; D-glyceraldehyde 3-phosphate from glycerone phosphate: step 1/1. In terms of biological role, involved in the gluconeogenesis. Catalyzes stereospecifically the conversion of dihydroxyacetone phosphate (DHAP) to D-glyceraldehyde-3-phosphate (G3P). This Bifidobacterium longum (strain DJO10A) protein is Triosephosphate isomerase.